The primary structure comprises 634 residues: tRNA uridine 5-carboxymethylaminomethyl modification enzyme MnmG (634 aa).

An FAD-binding site is contributed by 14-19 (GGGHAG). Position 279 to 293 (279 to 293 (GPRYCPSIEDKVVRF)) interacts with NAD(+).

It belongs to the MnmG family. In terms of assembly, homodimer. Heterotetramer of two MnmE and two MnmG subunits. Requires FAD as cofactor.

It is found in the cytoplasm. Its function is as follows. NAD-binding protein involved in the addition of a carboxymethylaminomethyl (cmnm) group at the wobble position (U34) of certain tRNAs, forming tRNA-cmnm(5)s(2)U34. The protein is tRNA uridine 5-carboxymethylaminomethyl modification enzyme MnmG of Xanthomonas euvesicatoria pv. vesicatoria (strain 85-10) (Xanthomonas campestris pv. vesicatoria).